The following is a 162-amino-acid chain: Transcriptional repressor NrdR (162 aa).

The disordered stretch occupies residues Met-1–Asp-21. The segment at Cys-3–Cys-34 is a zinc-finger region. One can recognise an ATP-cone domain in the interval Leu-49–Glu-139.

It belongs to the NrdR family. Zn(2+) is required as a cofactor.

Negatively regulates transcription of bacterial ribonucleotide reductase nrd genes and operons by binding to NrdR-boxes. This is Transcriptional repressor NrdR from Halorubrum lacusprofundi (strain ATCC 49239 / DSM 5036 / JCM 8891 / ACAM 34).